The following is a 447-amino-acid chain: Argininosuccinate synthase (447 aa).

Residues 17 to 25 (AFSGGLDTS) and Ala43 each bind ATP. Tyr99 provides a ligand contact to L-citrulline. ATP contacts are provided by Gly129 and Thr131. Residues Thr131, Asn135, and Asp136 each contribute to the L-aspartate site. Asn135 serves as a coordination point for L-citrulline. Asp136 contacts ATP. Residues Arg139 and Ser192 each contribute to the L-citrulline site. Asp194 is a binding site for ATP. Residues Thr201, Glu203, and Glu280 each contribute to the L-citrulline site.

It belongs to the argininosuccinate synthase family. Type 2 subfamily. Homotetramer.

It is found in the cytoplasm. The catalysed reaction is L-citrulline + L-aspartate + ATP = 2-(N(omega)-L-arginino)succinate + AMP + diphosphate + H(+). The protein operates within amino-acid biosynthesis; L-arginine biosynthesis; L-arginine from L-ornithine and carbamoyl phosphate: step 2/3. In Klebsiella pneumoniae (strain 342), this protein is Argininosuccinate synthase.